Consider the following 193-residue polypeptide: NADH-quinone oxidoreductase subunit B (193 aa).

A disordered region spans residues 1–25; the sequence is MGLNDSSGTLVAPKPKGIIDPNTGR. The [4Fe-4S] cluster site is built by Cys-72, Cys-73, Cys-137, and Cys-167.

It belongs to the complex I 20 kDa subunit family. As to quaternary structure, NDH-1 is composed of 14 different subunits. Subunits NuoB, C, D, E, F, and G constitute the peripheral sector of the complex. It depends on [4Fe-4S] cluster as a cofactor.

The protein localises to the cell inner membrane. It catalyses the reaction a quinone + NADH + 5 H(+)(in) = a quinol + NAD(+) + 4 H(+)(out). Its function is as follows. NDH-1 shuttles electrons from NADH, via FMN and iron-sulfur (Fe-S) centers, to quinones in the respiratory chain. Couples the redox reaction to proton translocation (for every two electrons transferred, four hydrogen ions are translocated across the cytoplasmic membrane), and thus conserves the redox energy in a proton gradient. This Mesorhizobium japonicum (strain LMG 29417 / CECT 9101 / MAFF 303099) (Mesorhizobium loti (strain MAFF 303099)) protein is NADH-quinone oxidoreductase subunit B.